The primary structure comprises 117 residues: UPF0295 protein YgzB (117 aa).

The next 2 membrane-spanning stretches (helical) occupy residues 13–33 (TFAL…IFFK) and 41–61 (LFMI…FWIG).

The protein belongs to the UPF0295 family.

The protein resides in the cell membrane. The sequence is that of UPF0295 protein YgzB (ygzB) from Bacillus subtilis (strain 168).